A 169-amino-acid chain; its full sequence is Putative lipocalin R877 (169 aa).

A signal peptide spans 1–18 (MWIIILIVIIVIITIIFS).

It belongs to the calycin superfamily. Lipocalin family.

Its subcellular location is the secreted. It localises to the virion. Its function is as follows. Could play a role in the transport of a small ligand. This is Putative lipocalin R877 from Acanthamoeba polyphaga mimivirus (APMV).